We begin with the raw amino-acid sequence, 225 residues long: Holliday junction branch migration complex subunit RuvA (225 aa).

Residues 1–71 (MISWISGELV…EDSDLLFGFS (71 aa)) form a domain I region. Positions 72-150 (SKDQKNFFIE…NELKIQEEKS (79 aa)) are domain II. The interval 151–161 (KDEFHIKDNKI) is flexible linker. The interval 161–225 (INKIVSDIEL…LDNDSSNIVR (65 aa)) is domain III.

It belongs to the RuvA family. As to quaternary structure, homotetramer. Forms an RuvA(8)-RuvB(12)-Holliday junction (HJ) complex. HJ DNA is sandwiched between 2 RuvA tetramers; dsDNA enters through RuvA and exits via RuvB. An RuvB hexamer assembles on each DNA strand where it exits the tetramer. Each RuvB hexamer is contacted by two RuvA subunits (via domain III) on 2 adjacent RuvB subunits; this complex drives branch migration. In the full resolvosome a probable DNA-RuvA(4)-RuvB(12)-RuvC(2) complex forms which resolves the HJ.

The protein localises to the cytoplasm. In terms of biological role, the RuvA-RuvB-RuvC complex processes Holliday junction (HJ) DNA during genetic recombination and DNA repair, while the RuvA-RuvB complex plays an important role in the rescue of blocked DNA replication forks via replication fork reversal (RFR). RuvA specifically binds to HJ cruciform DNA, conferring on it an open structure. The RuvB hexamer acts as an ATP-dependent pump, pulling dsDNA into and through the RuvAB complex. HJ branch migration allows RuvC to scan DNA until it finds its consensus sequence, where it cleaves and resolves the cruciform DNA. The protein is Holliday junction branch migration complex subunit RuvA of Prochlorococcus marinus (strain MIT 9312).